The following is a 209-amino-acid chain: Large ribosomal subunit protein uL3 (209 aa).

Belongs to the universal ribosomal protein uL3 family. Part of the 50S ribosomal subunit. Forms a cluster with proteins L14 and L19.

Its function is as follows. One of the primary rRNA binding proteins, it binds directly near the 3'-end of the 23S rRNA, where it nucleates assembly of the 50S subunit. The protein is Large ribosomal subunit protein uL3 of Carboxydothermus hydrogenoformans (strain ATCC BAA-161 / DSM 6008 / Z-2901).